Consider the following 328-residue polypeptide: tRNA N6-adenosine threonylcarbamoyltransferase (328 aa).

Positions 111 and 115 each coordinate Fe cation. Substrate-binding positions include 133-137 (LVSGG), D166, G179, D183, and N270. D296 lines the Fe cation pocket.

This sequence belongs to the KAE1 / TsaD family. Requires Fe(2+) as cofactor.

It is found in the cytoplasm. It carries out the reaction L-threonylcarbamoyladenylate + adenosine(37) in tRNA = N(6)-L-threonylcarbamoyladenosine(37) in tRNA + AMP + H(+). Functionally, required for the formation of a threonylcarbamoyl group on adenosine at position 37 (t(6)A37) in tRNAs that read codons beginning with adenine. Is involved in the transfer of the threonylcarbamoyl moiety of threonylcarbamoyl-AMP (TC-AMP) to the N6 group of A37, together with TsaE and TsaB. TsaD likely plays a direct catalytic role in this reaction. The polypeptide is tRNA N6-adenosine threonylcarbamoyltransferase (Phytoplasma australiense).